A 1060-amino-acid chain; its full sequence is Carbamoyl phosphate synthase large chain (1060 aa).

Residues 1–401 (MPKRTDIRKI…SLLKAVRSLE (401 aa)) form a carboxyphosphate synthetic domain region. Residues Arg129, Arg169, Gly175, Gly176, Gln208, Ile210, Glu215, Gly241, Ile242, His243, Gln284, and Glu298 each coordinate ATP. The ATP-grasp 1 domain maps to 133 to 327 (KNLMNQLNEP…IAKMAAKIAV (195 aa)). Positions 284, 298, and 300 each coordinate Mg(2+). Gln284, Glu298, and Asn300 together coordinate Mn(2+). The segment at 402–546 (IGTAHLELDG…YTTYEQENES (145 aa)) is oligomerization domain. The interval 547–929 (LVSAKPSILV…ALYKAFEASG (383 aa)) is carbamoyl phosphate synthetic domain. Residues 671 to 861 (DQLIQELNIP…MAQLATQLIL (191 aa)) form the ATP-grasp 2 domain. Residues Arg707, Arg746, Leu748, Glu752, Gly777, Val778, His779, Ser780, Gln820, and Glu832 each contribute to the ATP site. Positions 820, 832, and 834 each coordinate Mg(2+). Mn(2+) contacts are provided by Gln820, Glu832, and Asn834. The MGS-like domain occupies 930–1060 (MHLPSHGNVL…ESQSLLTKPL (131 aa)). The segment at 930–1060 (MHLPSHGNVL…ESQSLLTKPL (131 aa)) is allosteric domain.

Belongs to the CarB family. Composed of two chains; the small (or glutamine) chain promotes the hydrolysis of glutamine to ammonia, which is used by the large (or ammonia) chain to synthesize carbamoyl phosphate. Tetramer of heterodimers (alpha,beta)4. It depends on Mg(2+) as a cofactor. The cofactor is Mn(2+).

The enzyme catalyses hydrogencarbonate + L-glutamine + 2 ATP + H2O = carbamoyl phosphate + L-glutamate + 2 ADP + phosphate + 2 H(+). It catalyses the reaction hydrogencarbonate + NH4(+) + 2 ATP = carbamoyl phosphate + 2 ADP + phosphate + 2 H(+). The protein operates within amino-acid biosynthesis; L-arginine biosynthesis; carbamoyl phosphate from bicarbonate: step 1/1. It participates in pyrimidine metabolism; UMP biosynthesis via de novo pathway; (S)-dihydroorotate from bicarbonate: step 1/3. In terms of biological role, large subunit of the glutamine-dependent carbamoyl phosphate synthetase (CPSase). CPSase catalyzes the formation of carbamoyl phosphate from the ammonia moiety of glutamine, carbonate, and phosphate donated by ATP, constituting the first step of 2 biosynthetic pathways, one leading to arginine and/or urea and the other to pyrimidine nucleotides. The large subunit (synthetase) binds the substrates ammonia (free or transferred from glutamine from the small subunit), hydrogencarbonate and ATP and carries out an ATP-coupled ligase reaction, activating hydrogencarbonate by forming carboxy phosphate which reacts with ammonia to form carbamoyl phosphate. This is Carbamoyl phosphate synthase large chain from Latilactobacillus sakei subsp. sakei (strain 23K) (Lactobacillus sakei subsp. sakei).